Reading from the N-terminus, the 509-residue chain is Mitogen-activated protein kinase sma-5 (509 aa).

A disordered region spans residues 19 to 72 (DPITSMSPPQENRSPKAEYLNNFFNTNPTNGKSRGSQEAPRKPLGQTNLNVQGS). Composition is skewed to polar residues over residues 20-30 (PITSMSPPQEN) and 40-54 (NFFN…SRGS). Residues 105 to 411 (YEPTQNIGSG…IQDALLHPYI (307 aa)) enclose the Protein kinase domain. ATP is bound by residues 111-119 (IGSGAFGIV) and lysine 134. Catalysis depends on aspartate 231, which acts as the Proton acceptor. The disordered stretch occupies residues 460 to 482 (YSELHSGDSTGSTSDMSTNTSGE). Positions 466–481 (GDSTGSTSDMSTNTSG) are enriched in low complexity.

This sequence belongs to the protein kinase superfamily. CMGC Ser/Thr protein kinase family. MAP kinase subfamily. The cofactor is Mg(2+). Expressed in intestine with a stronger expression in the four most anterior cells, muscles, excretory cell, pharynx and, to a lesser extent, in hypodermis.

The enzyme catalyses L-seryl-[protein] + ATP = O-phospho-L-seryl-[protein] + ADP + H(+). It carries out the reaction L-threonyl-[protein] + ATP = O-phospho-L-threonyl-[protein] + ADP + H(+). In terms of biological role, serine/threonine-protein kinase involved in the postembryonic regulation of body size, mainly through control of cell growth. In particular, controls the volume of intestine, muscles and hypodermis. In addition, regulates growth, intestinal granule distribution, lifespan and number of offspring. The polypeptide is Mitogen-activated protein kinase sma-5 (Caenorhabditis elegans).